A 302-amino-acid polypeptide reads, in one-letter code: CASP-like protein 4A2 (302 aa).

Polar residues predominate over residues 1 to 13; that stretch reads MALQAQQQATPSP. Residues 1–134 form a disordered region; sequence MALQAQQQAT…APPPHAQVRS (134 aa). Topologically, residues 1 to 154 are cytoplasmic; it reads MALQAQQQAT…RKRRAAVMQR (154 aa). The span at 40–60 shows a compositional bias: low complexity; that stretch reads VVVASTHHAAAAARYVPPRAT. A compositionally biased stretch (pro residues) spans 99-129; sequence KTPPPAPPLPAAPPPPPAASPAPAPRAPPPH. Residues 155–175 form a helical membrane-spanning segment; it reads AALLARAAAAGLCLAALAVLA. Over 176-197 the chain is Extracellular; the sequence is SDTRRGWARDSYSNYAQFRYSE. A helical transmembrane segment spans residues 198 to 218; it reads AVNVVGFLYSVFQFVALAELM. The Cytoplasmic portion of the chain corresponds to 219-238; it reads RRNKHLIPHPKRDLFDFTMD. Residues 239–256 traverse the membrane as a helical segment; the sequence is QVVAYLLISSSSSATARA. At 257–273 the chain is on the extracellular side; the sequence is SDLIENWGSDSFPSMAN. The chain crosses the membrane as a helical span at residues 274 to 294; it reads GSIAISFVAFVVFAICSLISA. At 295–302 the chain is on the cytoplasmic side; the sequence is YNLFRRDM.

This sequence belongs to the Casparian strip membrane proteins (CASP) family. In terms of assembly, homodimer and heterodimers.

The protein localises to the cell membrane. This chain is CASP-like protein 4A2, found in Zea mays (Maize).